A 360-amino-acid polypeptide reads, in one-letter code: MSKQILVLPGDGIGPEIMAEAVKVLQLANEKYQLGFVLGYDELGGAAVDKYGVPLADETLERARRRCHPARRRRRSEMGRHRPGHPPGARPAENPFATGPVRQPAPGVLYPQLAEASTLRPEVVAGLDILIVRELTGGIYFGAPRESRLLANGERMAYDTLPYSESEIRRIAKVGFDMARVRGKKLCSVDKANVLASSQLWRAVVEEVAKDYPDVVLSHMYVDNAAMQLVRAPKQFDVIVTDNMFGDILSDEASMLTGSIGMLPSASLDADNKGMYEPCHGSRRPDIAGKGIANPLATILSVSMMLRYSFGQVEAANAIEQAVSKVLDQGLRTGDIWSEGCRKVGTAEMGDAVVAALATL.

Over residues 66-75 the composition is skewed to basic residues; it reads RCHPARRRRR. Residues 66–101 form a disordered region; it reads RCHPARRRRRSEMGRHRPGHPPGARPAENPFATGPV. Substrate is bound by residues Arg133 and Asp223. The Mg(2+) site is built by Asp223, Asp247, and Asp251.

Belongs to the isocitrate and isopropylmalate dehydrogenases family. LeuB type 1 subfamily. Homodimer. Mg(2+) serves as cofactor. The cofactor is Mn(2+).

It is found in the cytoplasm. It carries out the reaction (2R,3S)-3-isopropylmalate + NAD(+) = 4-methyl-2-oxopentanoate + CO2 + NADH. Its pathway is amino-acid biosynthesis; L-leucine biosynthesis; L-leucine from 3-methyl-2-oxobutanoate: step 3/4. Catalyzes the oxidation of 3-carboxy-2-hydroxy-4-methylpentanoate (3-isopropylmalate) to 3-carboxy-4-methyl-2-oxopentanoate. The product decarboxylates to 4-methyl-2 oxopentanoate. The protein is 3-isopropylmalate dehydrogenase (leuB) of Azotobacter vinelandii.